The sequence spans 82 residues: Sulfur carrier protein TusA (82 aa).

C17 acts as the Cysteine persulfide intermediate in catalysis.

This sequence belongs to the sulfur carrier protein TusA family.

It is found in the cytoplasm. Sulfur carrier protein which probably makes part of a sulfur-relay system. The polypeptide is Sulfur carrier protein TusA (Glaesserella parasuis serovar 5 (strain SH0165) (Haemophilus parasuis)).